Reading from the N-terminus, the 281-residue chain is Urease accessory protein UreD 2 (281 aa).

It belongs to the UreD family. As to quaternary structure, ureD, UreF and UreG form a complex that acts as a GTP-hydrolysis-dependent molecular chaperone, activating the urease apoprotein by helping to assemble the nickel containing metallocenter of UreC. The UreE protein probably delivers the nickel.

Its subcellular location is the cytoplasm. In terms of biological role, required for maturation of urease via the functional incorporation of the urease nickel metallocenter. This is Urease accessory protein UreD 2 from Pseudomonas syringae pv. tomato (strain ATCC BAA-871 / DC3000).